A 431-amino-acid chain; its full sequence is C2H2 type master regulator of conidiophore development brlA (431 aa).

Disordered regions lie at residues 29–51 (MTSS…SHGS), 211–275 (TPQQ…SEEY), and 287–306 (IRTH…VRSN). Low complexity predominate over residues 30-48 (TSSFSPLESPTPTPTSLYS). Positions 225-265 (PSSNYSDFPASLQTFKPHTPSTPVRSLSLGTPRSDTPQSRM) are enriched in polar residues. Positions 287–302 (IRTHRQPSRKPSKKQL) are enriched in basic residues. 2 consecutive C2H2-type zinc fingers follow at residues 321–345 (FKCK…MKSH) and 351–376 (HVCW…TKTH). Residues 390–412 (DETSPDYDPEFRGQLTPDGRPIY) form a disordered region.

The protein resides in the nucleus. Functionally, brlA, abaA and wetA are pivotal regulators of conidiophore development and conidium maturation. They act individually and together to regulate their own expression and that of numerous other sporulation-specific genes. Binds promoters of target genes at brlA response elements (BREs) containing the conserved sequence 5'-(C/A)(A/G)AGGG(G/A)-3'. Regulates the expression levels of seven secondary metabolism gene clusters including a down-regulated cluster putatively involved in the biosynthesis of the mycotoxins roquefortine C and meleagrin. Negatively regulates the expression of cellulase genes. This Penicillium oxalicum (strain 114-2 / CGMCC 5302) (Penicillium decumbens) protein is C2H2 type master regulator of conidiophore development brlA.